The sequence spans 387 residues: Short-chain dehydrogenase/reductase family 42E member 1 (387 aa).

Tyrosine 149 functions as the Proton acceptor in the catalytic mechanism. Lysine 153 contributes to the NAD(+) binding site. A run of 2 helical transmembrane segments spans residues 279 to 299 and 365 to 385; these read LPIS…FVVG and ILDV…LPVV.

This sequence belongs to the 3-beta-HSD family.

Its subcellular location is the membrane. The protein is Short-chain dehydrogenase/reductase family 42E member 1 (sdr42e1) of Danio rerio (Zebrafish).